We begin with the raw amino-acid sequence, 1503 residues long: DNA-directed RNA polymerase subunit beta' (1503 aa).

Residues Cys-71, Cys-73, Cys-86, and Cys-89 each contribute to the Zn(2+) site. Positions 470, 472, and 474 each coordinate Mg(2+). 4 residues coordinate Zn(2+): Cys-800, Cys-874, Cys-881, and Cys-884.

This sequence belongs to the RNA polymerase beta' chain family. As to quaternary structure, the RNAP catalytic core consists of 2 alpha, 1 beta, 1 beta' and 1 omega subunit. When a sigma factor is associated with the core the holoenzyme is formed, which can initiate transcription. Mg(2+) serves as cofactor. Requires Zn(2+) as cofactor.

The enzyme catalyses RNA(n) + a ribonucleoside 5'-triphosphate = RNA(n+1) + diphosphate. DNA-dependent RNA polymerase catalyzes the transcription of DNA into RNA using the four ribonucleoside triphosphates as substrates. This chain is DNA-directed RNA polymerase subunit beta', found in Sulfurimonas denitrificans (strain ATCC 33889 / DSM 1251) (Thiomicrospira denitrificans (strain ATCC 33889 / DSM 1251)).